A 388-amino-acid polypeptide reads, in one-letter code: MGKKAIQFGGGNIGRGFVAEFLHKAGYEVVFVDVMDKMVEALQQNKSYKVTEVSEEGEHTTTITNYRAINSKTHESDVIQEIATADVVTCAVGPNILKFIAPVIAKGIDARTESKPVAVIACENAIGATDTLHGFIKQHTSQDRVESLYDRAQFANSAIDRIVPQQAPNSGLDVRIEKFYEWAVEKTPFGSVGHPDIPAIHWVDNLEPYIERKLFTVNTSHATTAYFGHFRGKKMIADALEDKEIRGLVHKVLEETASLIVAKHDISEEEQKEYVEKIVSRISNPYLEDNVDRVGRAPLRKLSRKERFIGPASQLAERGMKYDSLMDAVEMALRFQNVPGDDESAELANILQEQPAEDATTNLTGLEKEHPLYPAVLDRVRKVQQGTK.

NAD(+) is bound at residue 5-16; that stretch reads AIQFGGGNIGRG. The active site involves Lys-213.

This sequence belongs to the mannitol dehydrogenase family. In terms of assembly, monomer.

The enzyme catalyses D-mannitol 1-phosphate + NAD(+) = beta-D-fructose 6-phosphate + NADH + H(+). In terms of biological role, catalyzes the NAD(H)-dependent interconversion of D-fructose 6-phosphate and D-mannitol 1-phosphate in the metabolism of mannitol. Has a strong preference for NADH over NADPH. In Aspergillus niger (strain ATCC MYA-4892 / CBS 513.88 / FGSC A1513), this protein is Mannitol-1-phosphate 5-dehydrogenase (mpdA).